Here is a 300-residue protein sequence, read N- to C-terminus: Acetylglutamate kinase (300 aa).

Residues 73 to 74 (GG), Arg95, and Asn197 each bind substrate.

This sequence belongs to the acetylglutamate kinase family. ArgB subfamily.

Its subcellular location is the cytoplasm. The catalysed reaction is N-acetyl-L-glutamate + ATP = N-acetyl-L-glutamyl 5-phosphate + ADP. It functions in the pathway amino-acid biosynthesis; L-arginine biosynthesis; N(2)-acetyl-L-ornithine from L-glutamate: step 2/4. Its function is as follows. Catalyzes the ATP-dependent phosphorylation of N-acetyl-L-glutamate. The sequence is that of Acetylglutamate kinase from Bordetella parapertussis (strain 12822 / ATCC BAA-587 / NCTC 13253).